The sequence spans 428 residues: MSYLVTIIAFIIVFGVLVTVHEYGHMFFAKRAGIMCPEFAIGMGPKIFSFRKNETLYTIRLLPVGGYVRMAGDGLEEPPVEPGMNVKIKLNEENEITHIILDDHHKFQQIEAIEVKKCDFKDDLFIEGITAYDNERHHFKIARKSFFVENGSLVQIAPRDRQFAHKKPWPKFLTLFAGPLFNFILALVLFIGLAYYQGTPTSTVEQVADKYPAQQAGIQKGDKIVQIGKYKISEFDDVDKALDKVKDNKTTVKFERDGKTKSVELTPKKTERKLTKVSSETKYVLGFQPASEHTLFKPIVYGFKSFLIGSTYIFSAVVGMLASIFTGGFSFDMLNGPVGIYHNVDSVVKAGIISLIGYTALLSVNLGIMNLIPIPALDGGRILFVIYEAIFRKPVNKKAETTIIAIGAIFMVVIMILVTWNDIRRYFL.

A Zn(2+)-binding site is contributed by His21. Glu22 is an active-site residue. His25 serves as a coordination point for Zn(2+). 4 consecutive transmembrane segments (helical) span residues 172-194, 309-331, 352-374, and 401-420; these read FLTL…IGLA, GSTY…GFSF, IISL…LIPI, and TTII…LVTW. A PDZ domain is found at 186–269; that stretch reads ALVLFIGLAY…TKSVELTPKK (84 aa).

This sequence belongs to the peptidase M50B family. The cofactor is Zn(2+).

It is found in the cell membrane. In Staphylococcus aureus (strain MRSA252), this protein is Putative zinc metalloprotease SAR1238.